A 165-amino-acid polypeptide reads, in one-letter code: Large ribosomal subunit protein uL10 (165 aa).

Belongs to the universal ribosomal protein uL10 family. As to quaternary structure, part of the ribosomal stalk of the 50S ribosomal subunit. The N-terminus interacts with L11 and the large rRNA to form the base of the stalk. The C-terminus forms an elongated spine to which L12 dimers bind in a sequential fashion forming a multimeric L10(L12)X complex.

Its function is as follows. Forms part of the ribosomal stalk, playing a central role in the interaction of the ribosome with GTP-bound translation factors. The chain is Large ribosomal subunit protein uL10 from Pectobacterium atrosepticum (strain SCRI 1043 / ATCC BAA-672) (Erwinia carotovora subsp. atroseptica).